The primary structure comprises 340 residues: Glycerol-3-phosphate dehydrogenase [NAD(P)+] (340 aa).

NADPH-binding residues include Ser-11, Trp-12, Arg-32, Arg-33, and Lys-106. Residues Lys-106, Gly-138, and Ser-140 each contribute to the sn-glycerol 3-phosphate site. NADPH is bound at residue Ala-142. Sn-glycerol 3-phosphate-binding residues include Lys-193, Asp-246, Ser-256, Arg-257, and Asn-258. Lys-193 functions as the Proton acceptor in the catalytic mechanism. Arg-257 is an NADPH binding site. Residues Val-281 and Glu-283 each contribute to the NADPH site.

The protein belongs to the NAD-dependent glycerol-3-phosphate dehydrogenase family.

Its subcellular location is the cytoplasm. The enzyme catalyses sn-glycerol 3-phosphate + NAD(+) = dihydroxyacetone phosphate + NADH + H(+). The catalysed reaction is sn-glycerol 3-phosphate + NADP(+) = dihydroxyacetone phosphate + NADPH + H(+). Its pathway is membrane lipid metabolism; glycerophospholipid metabolism. Functionally, catalyzes the reduction of the glycolytic intermediate dihydroxyacetone phosphate (DHAP) to sn-glycerol 3-phosphate (G3P), the key precursor for phospholipid synthesis. The sequence is that of Glycerol-3-phosphate dehydrogenase [NAD(P)+] from Shouchella clausii (strain KSM-K16) (Alkalihalobacillus clausii).